The chain runs to 355 residues: F-box only protein 32 (355 aa).

A Nuclear localization signal motif is present at residues 62–67 (KKRKKD). A Nuclear export signal motif is present at residues 169–173 (LLQTL). Residues 223–271 (LTFTDLPLCLQLNIMQRLSDGRDLVSLGQAAPDLHVLSEDRLLWKKLCQ) form the F-box domain. The short motif at 280–295 (RKRLILSDKGQLDWKK) is the Bipartite nuclear localization signal element.

In terms of assembly, part of the SCF (SKP1-CUL1-F-box) E3 ubiquitin-protein ligase complex SCF(FBXO32) formed of CUL1, SKP1, RBX1 and FBXO32. As to expression, specifically expressed in cardiac and skeletal muscle.

Its subcellular location is the cytoplasm. It is found in the nucleus. It participates in protein modification; protein ubiquitination. Functionally, substrate recognition component of a SCF (SKP1-CUL1-F-box protein) E3 ubiquitin-protein ligase complex which mediates the ubiquitination and subsequent proteasomal degradation of target proteins. Probably recognizes and binds to phosphorylated target proteins during skeletal muscle atrophy. Recognizes TERF1. The chain is F-box only protein 32 (FBXO32) from Homo sapiens (Human).